The following is a 426-amino-acid chain: Aspartate aminotransferase, mitochondrial (426 aa).

The N-terminal 29 residues, 1-29 (MIRSARLISNIKFGQKNIRQFSTNTNWWA), are a transit peptide targeting the mitochondrion. Residues Gly60, Trp156, and Asn209 each coordinate substrate. Lys273 bears the N6-(pyridoxal phosphate)lysine mark. Residue Arg401 participates in substrate binding.

It belongs to the class-I pyridoxal-phosphate-dependent aminotransferase family. In terms of assembly, homodimer. The cofactor is pyridoxal 5'-phosphate.

The protein resides in the mitochondrion matrix. It is found in the cell membrane. The enzyme catalyses L-aspartate + 2-oxoglutarate = oxaloacetate + L-glutamate. The catalysed reaction is L-kynurenine + 2-oxoglutarate = kynurenate + L-glutamate + H2O. Plays a key role in amino acid metabolism. Important for metabolite exchange between mitochondria and cytosol. The sequence is that of Aspartate aminotransferase, mitochondrial (aatA) from Dictyostelium discoideum (Social amoeba).